Consider the following 24-residue polypeptide: Ascaphin-7 (24 aa).

As to expression, expressed by the skin glands.

It is found in the secreted. Antimicrobial peptide that shows higher potency against Gram-negative bacteria than against Gram-positive bacteria. Has a very week hemolytic activity. This is Ascaphin-7 from Ascaphus truei (Coastal tailed frog).